The following is a 385-amino-acid chain: Probable nitrate transporter NarT (385 aa).

The next 12 membrane-spanning stretches (helical) occupy residues 14–34 (TLSL…MPYI), 47–67 (IILA…GYLT), 69–89 (IIGA…PIFF), 97–117 (GMLM…SVGV), 139–159 (GNIG…IIGW), 161–181 (TTVR…FIFG), 205–225 (LYYL…FGLF), 246–266 (GVFI…GDKF), 277–297 (IIMI…LFTI), 302–322 (ISIC…SYFA), 330–350 (GIVS…ITYV), and 359–379 (LAFI…GHLY).

It belongs to the major facilitator superfamily. Nitrate/nitrite porter (TC 2.A.1.8) family.

The protein resides in the cell membrane. In terms of biological role, probably required for nitrate uptake under anoxic conditions. Also possibly involved in excretion of nitrite produced by the dissimilatory reduction of nitrate. The protein is Probable nitrate transporter NarT (narT) of Staphylococcus haemolyticus (strain JCSC1435).